Here is a 398-residue protein sequence, read N- to C-terminus: ATP-dependent RNA helicase eIF4A (398 aa).

A Q motif motif is present at residues 25–53; sequence DSFDSMDLKPELLRGVYAYGFERPSAIQQ. One can recognise a Helicase ATP-binding domain in the interval 56–226; sequence IKPIIAGHDV…TKFMRDPIRI (171 aa). 69 to 76 lines the ATP pocket; sequence AQSGTGKT. The DEAD box motif lies at 174-177; that stretch reads DEAD. A Helicase C-terminal domain is found at 237–398; it reads GIKQFYIAVE…EMPMNVADLI (162 aa).

Belongs to the DEAD box helicase family. eIF4A subfamily. As to quaternary structure, component of the eIF4F complex, which composition varies with external and internal environmental conditions. It is composed of at least eIF4A, eIF4E and eIF4G.

It is found in the cytoplasm. The catalysed reaction is ATP + H2O = ADP + phosphate + H(+). Functionally, ATP-dependent RNA helicase which is a subunit of the eIF4F complex involved in cap recognition and is required for mRNA binding to ribosome. In the current model of translation initiation, eIF4A unwinds RNA secondary structures in the 5'-UTR of mRNAs which is necessary to allow efficient binding of the small ribosomal subunit, and subsequent scanning for the initiator codon. The protein is ATP-dependent RNA helicase eIF4A (tif1) of Aspergillus niger (strain ATCC MYA-4892 / CBS 513.88 / FGSC A1513).